A 431-amino-acid polypeptide reads, in one-letter code: Enolase (431 aa).

(2R)-2-phosphoglycerate is bound at residue Gln-166. Glu-208 acts as the Proton donor in catalysis. 3 residues coordinate Mg(2+): Asp-245, Glu-288, and Asp-315. Residues Lys-340, Arg-369, Ser-370, and Lys-391 each contribute to the (2R)-2-phosphoglycerate site. Lys-340 acts as the Proton acceptor in catalysis.

This sequence belongs to the enolase family. Mg(2+) is required as a cofactor.

Its subcellular location is the cytoplasm. The protein resides in the secreted. It is found in the cell surface. The catalysed reaction is (2R)-2-phosphoglycerate = phosphoenolpyruvate + H2O. It participates in carbohydrate degradation; glycolysis; pyruvate from D-glyceraldehyde 3-phosphate: step 4/5. Catalyzes the reversible conversion of 2-phosphoglycerate (2-PG) into phosphoenolpyruvate (PEP). It is essential for the degradation of carbohydrates via glycolysis. This chain is Enolase, found in Clostridium botulinum (strain 657 / Type Ba4).